Consider the following 4563-residue polypeptide: Apolipoprotein B-100 (4563 aa).

An N-terminal signal peptide occupies residues Met-1–Ala-27. A heparin-binding region spans residues Leu-32–Met-126. Asn-34 is a glycosylation site (N-linked (GlcNAc...) asparagine). Disulfide bonds link Cys-39–Cys-88 and Cys-78–Cys-97. One can recognise a Vitellogenin domain in the interval Phe-46 to Met-672. Asn-185 carries N-linked (GlcNAc...) asparagine glycosylation. Intrachain disulfides connect Cys-186–Cys-212, Cys-245–Cys-261, Cys-385–Cys-390, and Cys-478–Cys-513. Residues Thr-232–Met-306 are heparin-binding. Positions Asn-902 to Asn-959 are heparin-binding. A disulfide bond links Cys-966 and Cys-976. The N-linked (GlcNAc...) asparagine glycan is linked to Asn-983. A lipid anchor (S-palmitoyl cysteine) is attached at Cys-1112. Residues Asn-1368, Asn-1377, and Asn-1523 are each glycosylated (N-linked (GlcNAc...) asparagine). An N6-acetyllysine modification is found at Lys-2004. The heparin-binding stretch occupies residues Arg-2043 to Met-2178. 5 N-linked (GlcNAc...) asparagine glycosylation sites follow: Asn-2239, Asn-2560, Asn-2779, Asn-2982, and Asn-3101. The heparin-binding stretch occupies residues Phe-3161 to Glu-3236. The segment at Lys-3174–His-3184 is basic (possible receptor binding region). The cysteines at positions 3194 and 3324 are disulfide-linked. N-linked (GlcNAc...) asparagine glycosylation occurs at Asn-3224. Ser-3279 bears the Phosphoserine mark. 2 N-linked (GlcNAc...) asparagine glycosylation sites follow: Asn-3336 and Asn-3358. The segment at Val-3373–Leu-3393 is LDL receptor binding. The heparin-binding stretch occupies residues Gly-3383–Glu-3516. The interval Arg-3386 to Lys-3394 is basic (possible receptor binding region). N-linked (GlcNAc...) asparagine glycans are attached at residues Asn-3411, Asn-3465, and Asn-3895. Ser-4048 bears the Phosphoserine; by FAM20C mark. The residue at position 4052 (Thr-4052) is a Phosphothreonine. N-linked (GlcNAc...) asparagine glycans are attached at residues Asn-4237 and Asn-4431.

Interacts with PCSK9. Interacts with MTTP. Interacts with AUP1. Interacts with CIDEB. In terms of processing, palmitoylated; structural requirement for proper assembly of the hydrophobic core of the lipoprotein particle.

The protein localises to the cytoplasm. It is found in the secreted. Its subcellular location is the lipid droplet. Its function is as follows. Apolipoprotein B is a major protein constituent of chylomicrons (apo B-48), LDL (apo B-100) and VLDL (apo B-100). Apo B-100 functions as a recognition signal for the cellular binding and internalization of LDL particles by the apoB/E receptor. In Homo sapiens (Human), this protein is Apolipoprotein B-100 (APOB).